The following is a 118-amino-acid chain: HTH-type transcriptional regulator SarT (118 aa).

Residues 55–78 constitute a DNA-binding region (H-T-H motif); the sequence is MRDIISYIGIDQSRIVKSVKDLSK.

This sequence belongs to the SarA family.

It localises to the cytoplasm. Transcriptional regulator acting as an intermediary between major regulators sarA and agr and virulence genes. Represses alpha-hemolysin (hla) gene expression. Down-regulates agr RNAIII expression by repressing sarU, a positive activator of agr expression. Up-regulates sarS, which induces the expression of the cell wall-associated protein A (spa). The sequence is that of HTH-type transcriptional regulator SarT (sarT) from Staphylococcus aureus (strain NCTC 8325 / PS 47).